The sequence spans 599 residues: Aspartate--tRNA ligase (599 aa).

Glutamate 175 serves as a coordination point for L-aspartate. The segment at 199 to 202 (QQFK) is aspartate. L-aspartate is bound by residues arginine 221 and histidine 446. 221 to 223 (RDE) is a binding site for ATP. ATP is bound at residue glutamate 480. Arginine 487 serves as a coordination point for L-aspartate. 532-535 (GVDR) is a binding site for ATP.

This sequence belongs to the class-II aminoacyl-tRNA synthetase family. Type 1 subfamily. Homodimer.

It localises to the cytoplasm. It carries out the reaction tRNA(Asp) + L-aspartate + ATP = L-aspartyl-tRNA(Asp) + AMP + diphosphate. Catalyzes the attachment of L-aspartate to tRNA(Asp) in a two-step reaction: L-aspartate is first activated by ATP to form Asp-AMP and then transferred to the acceptor end of tRNA(Asp). The protein is Aspartate--tRNA ligase of Streptomyces griseus subsp. griseus (strain JCM 4626 / CBS 651.72 / NBRC 13350 / KCC S-0626 / ISP 5235).